The following is a 717-amino-acid chain: Glycine--tRNA ligase beta subunit (717 aa).

Belongs to the class-II aminoacyl-tRNA synthetase family. Tetramer of two alpha and two beta subunits.

It is found in the cytoplasm. It carries out the reaction tRNA(Gly) + glycine + ATP = glycyl-tRNA(Gly) + AMP + diphosphate. The protein is Glycine--tRNA ligase beta subunit of Agrobacterium fabrum (strain C58 / ATCC 33970) (Agrobacterium tumefaciens (strain C58)).